Consider the following 72-residue polypeptide: Hypotensin (72 aa).

The N-terminal stretch at 1 to 24 (MKMMIAVFVSILLLMFSLSSTAMG) is a signal peptide. Propeptides lie at residues 25–35 (METEQQNMEER) and 61–72 (RFDPATFGENED).

This sequence belongs to the non-disulfide-bridged peptide (NDBP) superfamily. In terms of tissue distribution, expressed by the venom gland.

Its subcellular location is the secreted. In terms of biological role, potentiates the hypotensive action of bradykinin (BK) in normotensive rats, and induces a vasorelaxant effect in mesenteric artery rings that is induced by endothelium-dependent release of nitric oxide (NO). Does not inhibit angiotensin converting enzyme (ACE). Shows neither hemolytic activity nor cytotoxicity to normal and cancer cells. Shows moderate antimicrobial activity against the fungi Candida albicans and the filamentous fungus Trichophyton rubrum, as well as against the bacteria C.albicans (MIC=128 ug/mL), C.tropicalis (MIC=128 ug/mL) and Aspergillus flavus (MIC=128 ug/mL). Has no antimicrobial activity against S.aureus, S.epidermidis and P.aeruginosa. This chain is Hypotensin, found in Tityus stigmurus (Brazilian scorpion).